The sequence spans 190 residues: Transcription termination/antitermination protein NusG (190 aa).

Positions 141-165 constitute a KOW domain; it reads GDMVRVTSGPFADFSGVVSEVNAPQ.

It belongs to the NusG family.

Functionally, participates in transcription elongation, termination and antitermination. This is Transcription termination/antitermination protein NusG from Deinococcus radiodurans (strain ATCC 13939 / DSM 20539 / JCM 16871 / CCUG 27074 / LMG 4051 / NBRC 15346 / NCIMB 9279 / VKM B-1422 / R1).